The chain runs to 197 residues: UPF0314 protein R03235 (197 aa).

The next 2 helical transmembrane spans lie at 16–36 (ALWLLACLGVLAIQVLVQHLM) and 152–172 (LPVAATVAIAIVLELFTGYMV).

The protein belongs to the UPF0314 family.

The protein resides in the cell membrane. This Rhizobium meliloti (strain 1021) (Ensifer meliloti) protein is UPF0314 protein R03235.